We begin with the raw amino-acid sequence, 263 residues long: Polyamine aminopropyltransferase (263 aa).

Residues 1–221 form the PABS domain; sequence MARHPYRRLR…AVMAFQSSPK (221 aa). Residues Asp-98 and 126–127 contribute to the S-methyl-5'-thioadenosine site; that span reads DG. The active-site Proton acceptor is the Asp-144.

The protein belongs to the spermidine/spermine synthase family. As to quaternary structure, homodimer or homotetramer.

Its subcellular location is the cytoplasm. The catalysed reaction is S-adenosyl 3-(methylsulfanyl)propylamine + putrescine = S-methyl-5'-thioadenosine + spermidine + H(+). Its pathway is amine and polyamine biosynthesis; spermidine biosynthesis; spermidine from putrescine: step 1/1. Its function is as follows. Catalyzes the irreversible transfer of a propylamine group from the amino donor S-adenosylmethioninamine (decarboxy-AdoMet) to putrescine (1,4-diaminobutane) to yield spermidine. The protein is Polyamine aminopropyltransferase of Neisseria meningitidis serogroup A / serotype 4A (strain DSM 15465 / Z2491).